A 150-amino-acid chain; its full sequence is Cdc42 effector protein 5 (150 aa).

Disordered regions lie at residues 1-20 (MPVMKQLGPAQPKKRLDRGA), 34-89 (LHVG…PADP), and 114-133 (SETTATKPDGDAHPRVQHPK). The 15-residue stretch at 23–37 (ISAPLGDFRHTLHVG) folds into the CRIB domain. An Omega-N-methylarginine modification is found at R38. 2 stretches are compositionally biased toward pro residues: residues 55-66 (GPPPEPGAPPVV) and 74-87 (PAAPQPPVAVPSPA). Residues 114–127 (SETTATKPDGDAHP) show a composition bias toward basic and acidic residues.

It belongs to the BORG/CEP family. In terms of assembly, interacts with CDC42 in a GTP-dependent manner, and with SEPT7. Highly expressed in the skeletal muscle.

The protein localises to the endomembrane system. The protein resides in the cytoplasm. Its subcellular location is the cytoskeleton. Its function is as follows. Probably involved in the organization of the actin cytoskeleton. May act downstream of CDC42 to induce actin filament assembly leading to cell shape changes. Induces pseudopodia formation in fibroblasts. Inhibits MAPK8 independently of CDC42 binding. Controls septin organization and this effect is negatively regulated by CDC42. The protein is Cdc42 effector protein 5 (Cdc42ep5) of Mus musculus (Mouse).